Here is a 598-residue protein sequence, read N- to C-terminus: UvrABC system protein C (598 aa).

Residues 14 to 91 (DSPGCYLHKD…IQKNMPKYNI (78 aa)) enclose the GIY-YIG domain. The 36-residue stretch at 196–231 (DKIIEDLRSKMLAASEEMAFERAAEYRDLISGIATM) folds into the UVR domain.

Belongs to the UvrC family. In terms of assembly, interacts with UvrB in an incision complex.

The protein localises to the cytoplasm. Its function is as follows. The UvrABC repair system catalyzes the recognition and processing of DNA lesions. UvrC both incises the 5' and 3' sides of the lesion. The N-terminal half is responsible for the 3' incision and the C-terminal half is responsible for the 5' incision. In Streptococcus pyogenes serotype M12 (strain MGAS2096), this protein is UvrABC system protein C.